The following is a 180-amino-acid chain: MISRASAVYDKLKQAERNIRGDESMQTLDAPIYEVKQESDWYKSEKKRKEDINSFFDKFEEKYGVKEGFSFYHSEYFGVYEGTEAYEIFKNDIVKNQVDGFYAFKKRSKYFKEIKAMIEQIEEVYPFRSHDELGLNNMTGRQWIGDRWFFGVKTEQLVNGDSVVATDYKDYLKIVMEHLD.

The sequence is that of SPbeta prophage-derived uncharacterized protein YosC (yosC) from Bacillus subtilis (strain 168).